We begin with the raw amino-acid sequence, 415 residues long: Runt-related transcription factor 3 (415 aa).

3 disordered regions span residues 1–48 (MRIP…GGRA), 176–266 (GPRE…FPDP), and 375–415 (NLMN…WRPY). The 129-residue stretch at 54–182 (SMVDVLADHA…TVDGPREPRR (129 aa)) folds into the Runt domain. Positions 186 to 205 (KLEDQTKPFPDRFGDLERLR) are enriched in basic and acidic residues. Lys-192 is covalently cross-linked (Glycyl lysine isopeptide (Lys-Gly) (interchain with G-Cter in SUMO2)). Positions 209 to 240 (TPSTPSPRGSLSTTSHFSSQPQTPIQGTSELN) are enriched in polar residues. The residue at position 243 (Ser-243) is a Phosphoserine. Polar residues predominate over residues 393 to 402 (SHSNSPTALS). Residues 406–415 (RMDEAVWRPY) are compositionally biased toward basic and acidic residues.

Heterodimer with CBFB. RUNX3 binds DNA as a monomer and through the Runt domain. DNA-binding is increased by heterodimerization. Interacts with TLE1 and SUV39H1. The tyrosine phosphorylated form (via runt domain) interacts with SRC (via protein kinase domain). Interacts with FYN and LCK. Interacts with FOXP3. Interacts with ZFHX3. Interacts with TBX21. Phosphorylated on tyrosine residues by SRC. Phosphorylated by LCK and FYN. In terms of tissue distribution, expressed in gastric cancer tissues (at protein level).

Its subcellular location is the nucleus. It is found in the cytoplasm. Its function is as follows. Forms the heterodimeric complex core-binding factor (CBF) with CBFB. RUNX members modulate the transcription of their target genes through recognizing the core consensus binding sequence 5'-TGTGGT-3', or very rarely, 5'-TGCGGT-3', within their regulatory regions via their runt domain, while CBFB is a non-DNA-binding regulatory subunit that allosterically enhances the sequence-specific DNA-binding capacity of RUNX. The heterodimers bind to the core site of a number of enhancers and promoters, including murine leukemia virus, polyomavirus enhancer, T-cell receptor enhancers, LCK, IL3 and GM-CSF promoters. May be involved in the control of cellular proliferation and/or differentiation. In association with ZFHX3, up-regulates CDKN1A promoter activity following TGF-beta stimulation. CBF complexes repress ZBTB7B transcription factor during cytotoxic (CD8+) T cell development. They bind to RUNX-binding sequence within the ZBTB7B locus acting as transcriptional silencer and allowing for cytotoxic T cell differentiation. CBF complexes binding to the transcriptional silencer is essential for recruitment of nuclear protein complexes that catalyze epigenetic modifications to establish epigenetic ZBTB7B silencing. Necessary for the development and survival of sensory neurons expressing parvalbumin. The protein is Runt-related transcription factor 3 (RUNX3) of Homo sapiens (Human).